Here is a 261-residue protein sequence, read N- to C-terminus: GTP cyclohydrolase FolE2 (261 aa).

The protein belongs to the GTP cyclohydrolase IV family.

The enzyme catalyses GTP + H2O = 7,8-dihydroneopterin 3'-triphosphate + formate + H(+). Its pathway is cofactor biosynthesis; 7,8-dihydroneopterin triphosphate biosynthesis; 7,8-dihydroneopterin triphosphate from GTP: step 1/1. Its function is as follows. Converts GTP to 7,8-dihydroneopterin triphosphate. This is GTP cyclohydrolase FolE2 from Herminiimonas arsenicoxydans.